The sequence spans 509 residues: Maturase K (509 aa).

The protein belongs to the intron maturase 2 family. MatK subfamily.

Its subcellular location is the plastid. It is found in the chloroplast. Its function is as follows. Usually encoded in the trnK tRNA gene intron. Probably assists in splicing its own and other chloroplast group II introns. This Jacaranda mimosifolia (Jacaranda) protein is Maturase K.